The sequence spans 120 residues: Chaperonin GroEL (120 aa).

Residue 23–27 (DGTTT) participates in ATP binding.

The protein belongs to the chaperonin (HSP60) family. In terms of assembly, forms a cylinder of 14 subunits composed of two heptameric rings stacked back-to-back. Interacts with the co-chaperonin GroES.

It localises to the cytoplasm. The enzyme catalyses ATP + H2O + a folded polypeptide = ADP + phosphate + an unfolded polypeptide.. Its function is as follows. Together with its co-chaperonin GroES, plays an essential role in assisting protein folding. The GroEL-GroES system forms a nano-cage that allows encapsulation of the non-native substrate proteins and provides a physical environment optimized to promote and accelerate protein folding. The chain is Chaperonin GroEL from Mycobacterium xenopi.